The following is a 299-amino-acid chain: Lipoyl synthase 2 (299 aa).

[4Fe-4S] cluster is bound by residues Cys43, Cys48, Cys54, Cys69, Cys73, Cys76, and Ser294. One can recognise a Radical SAM core domain in the interval 55–283; the sequence is YAAGTATFLL…GAVARDLGFA (229 aa).

It belongs to the radical SAM superfamily. Lipoyl synthase family. Requires [4Fe-4S] cluster as cofactor.

It is found in the cytoplasm. The enzyme catalyses [[Fe-S] cluster scaffold protein carrying a second [4Fe-4S](2+) cluster] + N(6)-octanoyl-L-lysyl-[protein] + 2 oxidized [2Fe-2S]-[ferredoxin] + 2 S-adenosyl-L-methionine + 4 H(+) = [[Fe-S] cluster scaffold protein] + N(6)-[(R)-dihydrolipoyl]-L-lysyl-[protein] + 4 Fe(3+) + 2 hydrogen sulfide + 2 5'-deoxyadenosine + 2 L-methionine + 2 reduced [2Fe-2S]-[ferredoxin]. It participates in protein modification; protein lipoylation via endogenous pathway; protein N(6)-(lipoyl)lysine from octanoyl-[acyl-carrier-protein]: step 2/2. Its function is as follows. Catalyzes the radical-mediated insertion of two sulfur atoms into the C-6 and C-8 positions of the octanoyl moiety bound to the lipoyl domains of lipoate-dependent enzymes, thereby converting the octanoylated domains into lipoylated derivatives. The chain is Lipoyl synthase 2 from Parasynechococcus marenigrum (strain WH8102).